The following is a 755-amino-acid chain: Polyribonucleotide nucleotidyltransferase (755 aa).

Positions 493 and 499 each coordinate Mg(2+). In terms of domain architecture, KH spans 560-619; it reads PRIMTIQIPVDKIGALIGPGGKTIRNICDTTGAQIDIEDDGRVFITAPDGEAAKKAISMI. In terms of domain architecture, S1 motif spans 629-698; that stretch reads GDIFLGKVVS…NTGKISLSRR (70 aa). The interval 704–755 is disordered; it reads ETPEARKAAGAAPRPRPREEQRGGREEPRSLREELRGPRRDGERPRPRRRDD. Basic and acidic residues predominate over residues 719 to 755; it reads RPREEQRGGREEPRSLREELRGPRRDGERPRPRRRDD.

This sequence belongs to the polyribonucleotide nucleotidyltransferase family. The cofactor is Mg(2+).

It localises to the cytoplasm. It catalyses the reaction RNA(n+1) + phosphate = RNA(n) + a ribonucleoside 5'-diphosphate. Functionally, involved in mRNA degradation. Catalyzes the phosphorolysis of single-stranded polyribonucleotides processively in the 3'- to 5'-direction. This is Polyribonucleotide nucleotidyltransferase from Chloroflexus aggregans (strain MD-66 / DSM 9485).